Reading from the N-terminus, the 217-residue chain is UPF0502 protein ESA_02280 (217 aa).

It belongs to the UPF0502 family.

This chain is UPF0502 protein ESA_02280, found in Cronobacter sakazakii (strain ATCC BAA-894) (Enterobacter sakazakii).